We begin with the raw amino-acid sequence, 102 residues long: Vacuolar ATPase assembly integral membrane protein VMA21 (102 aa).

Residues 1-30 (MERYDKATLNAAFAPEFRQNEGSLTSTLRT) lie on the Cytoplasmic side of the membrane. The chain crosses the membrane as a helical span at residues 31 to 51 (LLFFTALMITLPVGLYFSSKA). The Lumenal portion of the chain corresponds to 52 to 66 (YIFEGTLGMSNRDSY). Residues 67 to 87 (FYAAIVAVVTVHVVLAMFVYV) form a helical membrane-spanning segment. At 88 to 102 (AWSEGTRQWREGKQD) the chain is on the cytoplasmic side.

It belongs to the VMA21 family. As to quaternary structure, associates with the V0 complex of the vacuolar ATPase (V-ATPase). Interacts with ATP6AP2.

The protein localises to the endoplasmic reticulum membrane. It localises to the endoplasmic reticulum-Golgi intermediate compartment membrane. Its subcellular location is the cytoplasmic vesicle. The protein resides in the COPII-coated vesicle membrane. In terms of biological role, required for the assembly of the V0 complex of the vacuolar ATPase (V-ATPase) in the endoplasmic reticulum. In Gallus gallus (Chicken), this protein is Vacuolar ATPase assembly integral membrane protein VMA21.